Reading from the N-terminus, the 339-residue chain is MKKFINQFSASLKNNILVFLAFPFVWTSCARDNPLSSENSNISPNAAARAAVTGTTKANIKLFSFTEVNDTNPLNNLNFTLKNSGKPLVDMVVLFSANINYDAANDKVFVSNNPNVQHLLTNRAKYLKPLQDKGIKVILSILGNHDRSGIANLSTARAKAFAQELKNTCDLYNLDGVFFDDEYSAYQTPPPSGFVTPSNNAAARLAYETKQAMPNKLVTVYVYSRTSSFPTAVDGVNAGSYVDYAIHDYGGSYDLATNYPGLAKSGMVMSSQEFNQGRYATAQALRNIVTKGYGGHMIFAMDPNRSNFTSGQLPALKLIAKELYGDELVYSNTPYSKDW.

The segment at residues 1 to 50 is a signal peptide (or 51, or 52); that stretch reads MKKFINQFSASLKNNILVFLAFPFVWTSCARDNPLSSENSNISPNAAARA. One can recognise a GH18 domain in the interval 60-326; it reads IKLFSFTEVN…KLIAKELYGD (267 aa). E182 acts as the Proton donor in catalysis. Residue W339 is a propeptide, removed in mature form.

The protein belongs to the glycosyl hydrolase 18 family. In terms of assembly, monomer.

It is found in the secreted. The catalysed reaction is an N(4)-(oligosaccharide-(1-&gt;3)-[oligosaccharide-(1-&gt;6)]-beta-D-Man-(1-&gt;4)-beta-D-GlcNAc-(1-&gt;4)-alpha-D-GlcNAc)-L-asparaginyl-[protein] + H2O = an oligosaccharide-(1-&gt;3)-[oligosaccharide-(1-&gt;6)]-beta-D-Man-(1-&gt;4)-D-GlcNAc + N(4)-(N-acetyl-beta-D-glucosaminyl)-L-asparaginyl-[protein]. Functionally, endohydrolysis of the di-N-acetylchitobiosyl unit in high-mannose glycopeptides and glycoproteins. Does not hydrolyze complex bi- or triantennary glycans. The presence of a core-bound fucose impedes endo F1 hydrolysis. This Elizabethkingia meningoseptica (Chryseobacterium meningosepticum) protein is Endo-beta-N-acetylglucosaminidase F1 (endOF1).